The chain runs to 249 residues: tRNA (guanine-N(1)-)-methyltransferase (249 aa).

Residues Gly116 and 136 to 141 (IGDYIL) each bind S-adenosyl-L-methionine.

This sequence belongs to the RNA methyltransferase TrmD family. Homodimer.

It is found in the cytoplasm. It carries out the reaction guanosine(37) in tRNA + S-adenosyl-L-methionine = N(1)-methylguanosine(37) in tRNA + S-adenosyl-L-homocysteine + H(+). Its function is as follows. Specifically methylates guanosine-37 in various tRNAs. This Zymomonas mobilis subsp. mobilis (strain ATCC 31821 / ZM4 / CP4) protein is tRNA (guanine-N(1)-)-methyltransferase.